Here is a 111-residue protein sequence, read N- to C-terminus: BET1-like protein (111 aa).

Topologically, residues 1-86 (MADWARAQSP…MARSGRDNRK (86 aa)) are cytoplasmic. S9 and S37 each carry phosphoserine. The region spanning 15–77 (EILDRENKRM…TGSVKRFSTM (63 aa)) is the t-SNARE coiled-coil homology domain. Residues 87–107 (LLCGVAVGLIVAFFILSYLLS) form a helical; Anchor for type IV membrane protein membrane-spanning segment. The Lumenal portion of the chain corresponds to 108 to 111 (RART).

As to quaternary structure, component of a SNARE complex consisting of STX5, YKT6, GOSR1 and BET1L. Interacts with STX5.

Its subcellular location is the golgi apparatus membrane. It is found in the golgi apparatus. The protein resides in the trans-Golgi network membrane. Vesicle SNARE required for targeting and fusion of retrograde transport vesicles with the Golgi complex. Required for the integrity of the Golgi complex. This chain is BET1-like protein, found in Bos taurus (Bovine).